The primary structure comprises 302 residues: Lipoyl synthase (302 aa).

[4Fe-4S] cluster is bound by residues Cys44, Cys49, Cys55, Cys70, Cys74, Cys77, and Ser283. Residues 56–272 (WSKKHATVMI…ARVAKSKGFL (217 aa)) enclose the Radical SAM core domain.

Belongs to the radical SAM superfamily. Lipoyl synthase family. The cofactor is [4Fe-4S] cluster.

Its subcellular location is the cytoplasm. The catalysed reaction is [[Fe-S] cluster scaffold protein carrying a second [4Fe-4S](2+) cluster] + N(6)-octanoyl-L-lysyl-[protein] + 2 oxidized [2Fe-2S]-[ferredoxin] + 2 S-adenosyl-L-methionine + 4 H(+) = [[Fe-S] cluster scaffold protein] + N(6)-[(R)-dihydrolipoyl]-L-lysyl-[protein] + 4 Fe(3+) + 2 hydrogen sulfide + 2 5'-deoxyadenosine + 2 L-methionine + 2 reduced [2Fe-2S]-[ferredoxin]. Its pathway is protein modification; protein lipoylation via endogenous pathway; protein N(6)-(lipoyl)lysine from octanoyl-[acyl-carrier-protein]: step 2/2. Functionally, catalyzes the radical-mediated insertion of two sulfur atoms into the C-6 and C-8 positions of the octanoyl moiety bound to the lipoyl domains of lipoate-dependent enzymes, thereby converting the octanoylated domains into lipoylated derivatives. The protein is Lipoyl synthase of Orientia tsutsugamushi (strain Ikeda) (Rickettsia tsutsugamushi).